The primary structure comprises 999 residues: Receptor-like protein kinase 5 (999 aa).

The first 14 residues, 1–14 (MLYCLILLLCLSST), serve as a signal peptide directing secretion. At 15 to 621 (YLPSLSLNQD…LCRKITRSKN (607 aa)) the chain is on the extracellular side. LRR repeat units follow at residues 90-112 (SLHS…DFDT), 115-137 (NLIS…LPFN), 140-161 (NLKF…SFGE), 164-186 (KLES…LGNV), and 188-208 (TLKE…PSQL). 2 N-linked (GlcNAc...) asparagine glycosylation sites follow: Asn-98 and Asn-102. Asn-150 and Asn-185 each carry an N-linked (GlcNAc...) asparagine glycan. Asn-210 carries an N-linked (GlcNAc...) asparagine glycan. 2 LRR repeats span residues 213 to 236 (ELQV…SRLT) and 237 to 259 (SLVN…ITQL). Asn-269 and Asn-282 each carry an N-linked (GlcNAc...) asparagine glycan. 12 LRR repeats span residues 285 to 307 (TLKR…LNLL), 308 to 330 (NLES…ITRS), 332 to 353 (TLSE…QLGA), 356 to 378 (PLQY…VCGE), 380 to 402 (KLEY…LGKC), 404 to 427 (SLTR…WGLP), 428 to 450 (RLSL…IIGA), 452 to 474 (NLSN…IGSL), 500 to 523 (QLSR…RGWK), 524 to 546 (NLNE…VGIL), 548 to 569 (VLNY…ELQN), and 571 to 593 (KLNV…YANK). N-linked (GlcNAc...) asparagine glycosylation occurs at Asn-452. Asn-576 is a glycosylation site (N-linked (GlcNAc...) asparagine). Residues 622 to 641 (IGYVWILLTIFLLAGLVFVV) traverse the membrane as a helical segment. Residues 642–999 (GIVMFIAKCR…PYYTEDLNSV (358 aa)) lie on the Cytoplasmic side of the membrane. Positions 683–968 (LDEKNVIGFG…KVVIMLQEVS (286 aa)) constitute a Protein kinase domain. Residues 689-697 (IGFGSSGKV) and Lys-711 contribute to the ATP site. Phosphotyrosine is present on residues Tyr-766 and Tyr-806. Asp-819 acts as the Proton acceptor in catalysis. Ser-856 is subject to Phosphoserine. A phosphotyrosine mark is found at Tyr-864 and Tyr-871. Thr-872 is subject to Phosphothreonine. The segment at 972–999 (PCSSPNTSKRSKTGGKLSPYYTEDLNSV) is disordered.

The protein belongs to the protein kinase superfamily. Ser/Thr protein kinase family. As to quaternary structure, interacts with CST. Binds to IDA. Mg(2+) is required as a cofactor. The cofactor is Mn(2+). Post-translationally, autophosphorylated on Ser, Thr and Tyr residues. As to expression, expressed in roots and rosettes. Expressed at the base of petioles and pedicels, and in the abscission zones of the floral organs.

It localises to the cell membrane. It carries out the reaction L-seryl-[protein] + ATP = O-phospho-L-seryl-[protein] + ADP + H(+). The catalysed reaction is L-threonyl-[protein] + ATP = O-phospho-L-threonyl-[protein] + ADP + H(+). The enzyme catalyses L-tyrosyl-[protein] + ATP = O-phospho-L-tyrosyl-[protein] + ADP + H(+). In terms of biological role, receptor with a dual specificity kinase activity acting on both serine/threonine- and tyrosine-containing substrates that controls floral organ abscission. May interact with the 'INFLORESCENCE DEFICIENT IN ABSCISSION' (IDA) ligands family. This Arabidopsis thaliana (Mouse-ear cress) protein is Receptor-like protein kinase 5 (RLK5).